A 570-amino-acid polypeptide reads, in one-letter code: Urease subunit alpha (570 aa).

The Urease domain maps to 131-570; the sequence is GGMDSHIHFI…LPMAQRYFLF (440 aa). 3 residues coordinate Ni(2+): H136, H138, and K219. K219 bears the N6-carboxylysine mark. A substrate-binding site is contributed by H221. Ni(2+)-binding residues include H248 and H274. H322 functions as the Proton donor in the catalytic mechanism. D362 contributes to the Ni(2+) binding site.

Belongs to the metallo-dependent hydrolases superfamily. Urease alpha subunit family. As to quaternary structure, heterotrimer of UreA (gamma), UreB (beta) and UreC (alpha) subunits. Three heterotrimers associate to form the active enzyme. Ni cation serves as cofactor. Post-translationally, carboxylation allows a single lysine to coordinate two nickel ions.

Its subcellular location is the cytoplasm. The catalysed reaction is urea + 2 H2O + H(+) = hydrogencarbonate + 2 NH4(+). The protein operates within nitrogen metabolism; urea degradation; CO(2) and NH(3) from urea (urease route): step 1/1. This is Urease subunit alpha from Sinorhizobium fredii (strain NBRC 101917 / NGR234).